Here is a 132-residue protein sequence, read N- to C-terminus: Small ribosomal subunit protein uS8 (132 aa).

It belongs to the universal ribosomal protein uS8 family. Part of the 30S ribosomal subunit. Contacts proteins S5 and S12.

One of the primary rRNA binding proteins, it binds directly to 16S rRNA central domain where it helps coordinate assembly of the platform of the 30S subunit. The chain is Small ribosomal subunit protein uS8 from Geobacillus kaustophilus (strain HTA426).